The chain runs to 89 residues: Small ribosomal subunit protein uS14 (89 aa).

This sequence belongs to the universal ribosomal protein uS14 family. In terms of assembly, part of the 30S ribosomal subunit. Contacts proteins S3 and S10.

Functionally, binds 16S rRNA, required for the assembly of 30S particles and may also be responsible for determining the conformation of the 16S rRNA at the A site. The protein is Small ribosomal subunit protein uS14 of Porphyromonas gingivalis (strain ATCC 33277 / DSM 20709 / CIP 103683 / JCM 12257 / NCTC 11834 / 2561).